The following is a 321-amino-acid chain: Anther-specific protein TA-29 (321 aa).

Positions 301-321 (RSDEEEAHHQSKQHKDEDIIN) are disordered.

As to expression, anther specific (tapetal cells).

The protein is Anther-specific protein TA-29 (TA-29) of Nicotiana tabacum (Common tobacco).